The primary structure comprises 246 residues: Pyridoxine 5'-phosphate synthase (246 aa).

Asn12 provides a ligand contact to 3-amino-2-oxopropyl phosphate. Residue 14-15 (DH) participates in 1-deoxy-D-xylulose 5-phosphate binding. Residue Arg23 coordinates 3-amino-2-oxopropyl phosphate. His48 serves as the catalytic Proton acceptor. Residues Arg50 and His55 each coordinate 1-deoxy-D-xylulose 5-phosphate. Residue Glu75 is the Proton acceptor of the active site. A 1-deoxy-D-xylulose 5-phosphate-binding site is contributed by Thr105. Catalysis depends on His196, which acts as the Proton donor. Residues Gly197 and 218-219 (GH) contribute to the 3-amino-2-oxopropyl phosphate site.

It belongs to the PNP synthase family. Homooctamer; tetramer of dimers.

It is found in the cytoplasm. It catalyses the reaction 3-amino-2-oxopropyl phosphate + 1-deoxy-D-xylulose 5-phosphate = pyridoxine 5'-phosphate + phosphate + 2 H2O + H(+). It functions in the pathway cofactor biosynthesis; pyridoxine 5'-phosphate biosynthesis; pyridoxine 5'-phosphate from D-erythrose 4-phosphate: step 5/5. Catalyzes the complicated ring closure reaction between the two acyclic compounds 1-deoxy-D-xylulose-5-phosphate (DXP) and 3-amino-2-oxopropyl phosphate (1-amino-acetone-3-phosphate or AAP) to form pyridoxine 5'-phosphate (PNP) and inorganic phosphate. The sequence is that of Pyridoxine 5'-phosphate synthase from Thiobacillus denitrificans (strain ATCC 25259 / T1).